The chain runs to 465 residues: UPF0324 membrane protein CC_0425 (465 aa).

The tract at residues 97–132 is disordered; that stretch reads HRQPDRAPPARASEQPLRQGRRALRRRPDQRRHRPR. Residues 115-132 are compositionally biased toward basic residues; it reads QGRRALRRRPDQRRHRPR. A run of 10 helical transmembrane segments spans residues 135–157, 172–194, 219–241, 251–273, 286–308, 318–340, 352–374, 378–400, 405–427, and 442–464; these read AAAL…LMAV, LLAV…GAGL, AALG…GIGA, LAEA…LAAS, TALV…PPIA, AGVF…ASVS, LSRI…RTAQ, ISGL…ARGL, PALV…GAIS, and LAIL…TRIF.

Belongs to the UPF0324 family.

It is found in the cell membrane. The sequence is that of UPF0324 membrane protein CC_0425 from Caulobacter vibrioides (strain ATCC 19089 / CIP 103742 / CB 15) (Caulobacter crescentus).